Here is a 340-residue protein sequence, read N- to C-terminus: Glyceraldehyde-3-phosphate dehydrogenase (340 aa).

NAD(+) contacts are provided by residues 11–12 and G109; that span reads TI. D-glyceraldehyde 3-phosphate is bound at residue 138–140; it reads SCN. The active-site Nucleophile is C139. R167 lines the NAD(+) pocket. D-glyceraldehyde 3-phosphate is bound at residue 193-194; that stretch reads HA. NAD(+) is bound at residue Q300.

Belongs to the glyceraldehyde-3-phosphate dehydrogenase family. In terms of assembly, homotetramer.

Its subcellular location is the cytoplasm. It catalyses the reaction D-glyceraldehyde 3-phosphate + phosphate + NADP(+) = (2R)-3-phospho-glyceroyl phosphate + NADPH + H(+). The enzyme catalyses D-glyceraldehyde 3-phosphate + phosphate + NAD(+) = (2R)-3-phospho-glyceroyl phosphate + NADH + H(+). The protein operates within carbohydrate degradation; glycolysis; pyruvate from D-glyceraldehyde 3-phosphate: step 1/5. The chain is Glyceraldehyde-3-phosphate dehydrogenase from Saccharolobus islandicus (strain M.14.25 / Kamchatka #1) (Sulfolobus islandicus).